A 345-amino-acid chain; its full sequence is MWRGGRLSSRGVRFLETLGFACPSAVAEPPRVTSWTAFSGNQLTRNLQIKPWEFSGHRTMWLRSYRITFSCLTRLKTYRSSWKKLYSTSQTVDSKEVKTFQALAHSWWDEQGKFAPLHSMNDLRVPFIRDNLLKTSTNHDPGKPLSGMKILDVGCGGGLLTEPLGRLGASVVGIDPVAENIKIAQHHKSFDPVLDKRIQYRVCSLEETLNENAECFDAVVASEVVEHVNNLEMFIQCCYQVLKPGGSLFITTVNKTQLSYVLGIVFSEQIAGIVPKGTHTWEKFVSPEKLESILEPNGLSVETVAGMVYNPFSGYWHWTENTSLNYAAHAVRARAQEHLEPAESA.

A mitochondrion-targeting transit peptide spans 1–86; it reads MWRGGRLSSR…TYRSSWKKLY (86 aa). Residue Arg-124 coordinates S-adenosyl-L-methionine. N6-acetyllysine is present on residues Lys-143 and Lys-149. Residues Gly-154 and Asp-175 each contribute to the S-adenosyl-L-methionine site. Position 196 is an N6-acetyllysine (Lys-196). Ser-222 serves as a coordination point for S-adenosyl-L-methionine. Glu-223, Glu-226, and His-227 together coordinate Mg(2+).

Belongs to the class I-like SAM-binding methyltransferase superfamily. UbiG/COQ3 family. In terms of assembly, component of a multi-subunit COQ enzyme complex, composed of at least COQ3, COQ4, COQ5, COQ6, COQ7 and COQ9. It depends on Mg(2+) as a cofactor.

The protein localises to the mitochondrion inner membrane. It catalyses the reaction 3,4-dihydroxy-5-(all-trans-decaprenyl)benzoate + S-adenosyl-L-methionine = 4-hydroxy-3-methoxy-5-(all-trans-decaprenyl)benzoate + S-adenosyl-L-homocysteine + H(+). It carries out the reaction a 3-demethylubiquinone + S-adenosyl-L-methionine = a ubiquinone + S-adenosyl-L-homocysteine. The enzyme catalyses 3-demethylubiquinol-10 + S-adenosyl-L-methionine = ubiquinol-10 + S-adenosyl-L-homocysteine + H(+). It functions in the pathway cofactor biosynthesis; ubiquinone biosynthesis. In terms of biological role, O-methyltransferase required for two non-consecutive steps during ubiquinone biosynthesis. Catalyzes the 2 O-methylation of 3,4-dihydroxy-5-(all-trans-decaprenyl)benzoic acid into 4-hydroxy-3-methoxy-5-(all-trans-decaprenyl)benzoic acid. Also catalyzes the last step of ubiquinone biosynthesis by mediating methylation of 3-demethylubiquinone into ubiquinone. Also able to mediate the methylation of 3-demethylubiquinol-10 into ubiquinol-10. In Rattus norvegicus (Rat), this protein is Ubiquinone biosynthesis O-methyltransferase, mitochondrial.